The primary structure comprises 418 residues: UPF0261 protein BMEII0128 (418 aa).

It belongs to the UPF0261 family.

In Brucella melitensis biotype 1 (strain ATCC 23456 / CCUG 17765 / NCTC 10094 / 16M), this protein is UPF0261 protein BMEII0128.